A 162-amino-acid chain; its full sequence is Ribonuclease H (162 aa).

Positions Met1 to Ala141 constitute an RNase H type-1 domain. Residues Asp9, Glu47, Asp69, and Asp133 each coordinate Mg(2+). A disordered region spans residues Gly139–Arg162.

Belongs to the RNase H family. Monomer. Requires Mg(2+) as cofactor.

The protein localises to the cytoplasm. The enzyme catalyses Endonucleolytic cleavage to 5'-phosphomonoester.. Its function is as follows. Endonuclease that specifically degrades the RNA of RNA-DNA hybrids. The polypeptide is Ribonuclease H (Chelativorans sp. (strain BNC1)).